Reading from the N-terminus, the 168-residue chain is Cofilin-1-B (168 aa).

A2 carries the post-translational modification N-acetylalanine. The ADF-H domain occupies 4 to 153 (GVMVSDDVVK…NDPCNLADKL (150 aa)). Residues 30-34 (KKRKK) carry the Nuclear localization signal motif.

Belongs to the actin-binding proteins ADF family. In terms of processing, inactive when phosphorylated. Phosphorylation levels vary during development. Oocytes contain only the phosphorylated form, and 80-95% of cfl1 protein is phosphorylated in unfertilized eggs. Rapid dephosphorylation occurs within 30 minutes after fertilization. Phosphorylation levels increase again between the morula and blastula stages (5-8 hpf) and then decrease again as gastrulation approaches. Dephosphorylated by pdxp. Expressed diffusely in both animal and vegetal hemispheres of the oocyte. During cleavage, expression accumulates around the cleavage furrow, along the vegetal membrane, and later in the midbody. Strongly expressed in the animal hemisphere during blastula stages, with most cells showing expression by gastrulation. By stage 17, expression is highest in cells of the developing neuroectoderm, and at stage 24 the notochord, neural tube, neural crest, somites and some cells of the archenteron show high expression. By stage 35, expression has declined in the notochord, but remains in the neural tube, epidermis and a layer of cells in the archenteron. Also highly expressed in the retina and neuronal cell bodies at the base of the cement gland but not the cement gland itself. At stage 38, expression is widespread, being highest in the nervous system and retina. In the adult, expression is high in the brain, heart, oocyte, stomach, and low in skeletal muscle.

The protein resides in the nucleus matrix. Its subcellular location is the cytoplasm. The protein localises to the cytoskeleton. It localises to the cell cortex. It is found in the membrane. In terms of biological role, may play a role in the regulation of cell morphology and cytoskeletal organization. Binds to F-actin and exhibits pH-sensitive F-actin depolymerizing activity. Required for formation of the cleavage furrow during cytokinesis. The polypeptide is Cofilin-1-B (cfl1-b) (Xenopus laevis (African clawed frog)).